A 246-amino-acid polypeptide reads, in one-letter code: Aliphatic sulfonates import ATP-binding protein SsuB 2 (246 aa).

Residues 4–218 (VTVRGLRRAF…RRDPRFEQAR (215 aa)) enclose the ABC transporter domain. 36-43 (GRSGGGKT) contacts ATP.

Belongs to the ABC transporter superfamily. Aliphatic sulfonates importer (TC 3.A.1.17.2) family. The complex is composed of two ATP-binding proteins (SsuB), two transmembrane proteins (SsuC) and a solute-binding protein (SsuA).

It localises to the cell membrane. It catalyses the reaction ATP + H2O + aliphatic sulfonate-[sulfonate-binding protein]Side 1 = ADP + phosphate + aliphatic sulfonateSide 2 + [sulfonate-binding protein]Side 1.. In terms of biological role, part of the ABC transporter complex SsuABC involved in aliphatic sulfonates import. Responsible for energy coupling to the transport system. In Frankia alni (strain DSM 45986 / CECT 9034 / ACN14a), this protein is Aliphatic sulfonates import ATP-binding protein SsuB 2.